We begin with the raw amino-acid sequence, 398 residues long: Stabilizer of axonemal microtubules 2 (398 aa).

6 mn regions span residues 114 to 126, 148 to 162, 248 to 260, 282 to 296, 316 to 328, and 350 to 364; these read STTF…PQEI, ITSH…QLEL, NSTS…PYQA, KSIM…ESCR, LSTF…PHEL, and VTMY…RQEI.

The protein belongs to the FAM154 family.

This is Stabilizer of axonemal microtubules 2 (SAXO2) from Homo sapiens (Human).